A 64-amino-acid polypeptide reads, in one-letter code: Large ribosomal subunit protein bL35 (64 aa).

Belongs to the bacterial ribosomal protein bL35 family.

The chain is Large ribosomal subunit protein bL35 from Leifsonia xyli subsp. xyli (strain CTCB07).